The sequence spans 125 residues: Small ribosomal subunit protein uS13 (125 aa).

The interval 91–125 (HRRSLPVRGQNTQTNARTRKGKRKTVAGKKKAARK) is disordered. Over residues 107-125 (RTRKGKRKTVAGKKKAARK) the composition is skewed to basic residues.

This sequence belongs to the universal ribosomal protein uS13 family. Part of the 30S ribosomal subunit. Forms a loose heterodimer with protein S19. Forms two bridges to the 50S subunit in the 70S ribosome.

Functionally, located at the top of the head of the 30S subunit, it contacts several helices of the 16S rRNA. In the 70S ribosome it contacts the 23S rRNA (bridge B1a) and protein L5 of the 50S subunit (bridge B1b), connecting the 2 subunits; these bridges are implicated in subunit movement. Contacts the tRNAs in the A and P-sites. This chain is Small ribosomal subunit protein uS13, found in Chlorobium phaeovibrioides (strain DSM 265 / 1930) (Prosthecochloris vibrioformis (strain DSM 265)).